Reading from the N-terminus, the 75-residue chain is Putative DNA-directed RNA polymerase subunit omega (75 aa).

This sequence belongs to the RNA polymerase subunit omega family.

It localises to the plastid. It is found in the chloroplast. The catalysed reaction is RNA(n) + a ribonucleoside 5'-triphosphate = RNA(n+1) + diphosphate. Its function is as follows. May be involved in RNA polymerase activity. In Porphyra purpurea (Red seaweed), this protein is Putative DNA-directed RNA polymerase subunit omega (rpoZ).